The primary structure comprises 465 residues: Cerebellar degeneration-related protein 2-like (465 aa).

Coiled-coil stretches lie at residues 38-143 (LLER…EQLR) and 188-265 (LEQE…TYLL). The interval 282-314 (APEADDPQPGRGDDLGAQDGVSSPAASPGHVVR) is disordered. Phosphoserine is present on residues Ser308, Ser318, and Ser344. Positions 350-377 (MSILREVDEQYHALLEKYEELLSKCRQH) form a coiled coil. The disordered stretch occupies residues 382–417 (RHAGVQTSRPISRDSSWRDLRGGEEGQGEVKAGEKS). Over residues 392 to 405 (ISRDSSWRDLRGGE) the composition is skewed to basic and acidic residues.

The protein belongs to the CDR2 family.

This Homo sapiens (Human) protein is Cerebellar degeneration-related protein 2-like (CDR2L).